The sequence spans 158 residues: 6,7-dimethyl-8-ribityllumazine synthase (158 aa).

5-amino-6-(D-ribitylamino)uracil contacts are provided by residues Phe22, 57 to 59 (AVE), and 81 to 83 (AVI). (2S)-2-hydroxy-3-oxobutyl phosphate is bound at residue 86-87 (GT). His89 serves as the catalytic Proton donor. Residue Phe114 participates in 5-amino-6-(D-ribitylamino)uracil binding. Residue Arg128 participates in (2S)-2-hydroxy-3-oxobutyl phosphate binding.

Belongs to the DMRL synthase family. In terms of assembly, forms an icosahedral capsid composed of 60 subunits, arranged as a dodecamer of pentamers.

The enzyme catalyses (2S)-2-hydroxy-3-oxobutyl phosphate + 5-amino-6-(D-ribitylamino)uracil = 6,7-dimethyl-8-(1-D-ribityl)lumazine + phosphate + 2 H2O + H(+). Its pathway is cofactor biosynthesis; riboflavin biosynthesis; riboflavin from 2-hydroxy-3-oxobutyl phosphate and 5-amino-6-(D-ribitylamino)uracil: step 1/2. Catalyzes the formation of 6,7-dimethyl-8-ribityllumazine by condensation of 5-amino-6-(D-ribitylamino)uracil with 3,4-dihydroxy-2-butanone 4-phosphate. This is the penultimate step in the biosynthesis of riboflavin. The sequence is that of 6,7-dimethyl-8-ribityllumazine synthase from Shewanella putrefaciens (strain CN-32 / ATCC BAA-453).